The primary structure comprises 205 residues: Small ribosomal subunit protein uS4 (205 aa).

One can recognise an S4 RNA-binding domain in the interval 95 to 158; it reads SRLDNIVYRM…TKSPLVKNFI (64 aa).

The protein belongs to the universal ribosomal protein uS4 family. In terms of assembly, part of the 30S ribosomal subunit. Contacts protein S5. The interaction surface between S4 and S5 is involved in control of translational fidelity.

Functionally, one of the primary rRNA binding proteins, it binds directly to 16S rRNA where it nucleates assembly of the body of the 30S subunit. With S5 and S12 plays an important role in translational accuracy. The protein is Small ribosomal subunit protein uS4 of Mycoplasma genitalium (strain ATCC 33530 / DSM 19775 / NCTC 10195 / G37) (Mycoplasmoides genitalium).